Here is a 340-residue protein sequence, read N- to C-terminus: N-acetyl-gamma-glutamyl-phosphate reductase (340 aa).

Residue Cys146 is part of the active site.

This sequence belongs to the NAGSA dehydrogenase family. Type 1 subfamily.

The protein localises to the cytoplasm. The catalysed reaction is N-acetyl-L-glutamate 5-semialdehyde + phosphate + NADP(+) = N-acetyl-L-glutamyl 5-phosphate + NADPH + H(+). Its pathway is amino-acid biosynthesis; L-arginine biosynthesis; N(2)-acetyl-L-ornithine from L-glutamate: step 3/4. In terms of biological role, catalyzes the NADPH-dependent reduction of N-acetyl-5-glutamyl phosphate to yield N-acetyl-L-glutamate 5-semialdehyde. In Streptococcus thermophilus (strain CNRZ 1066), this protein is N-acetyl-gamma-glutamyl-phosphate reductase.